The chain runs to 339 residues: EEIG family member 2 (339 aa).

The C2 NT-type domain maps to 1 to 111 (MRLLDGGSFT…ILKVLISMQL (111 aa)). A Phosphoserine modification is found at Ser197. The segment at 226–262 (TEPITAEPSPDPTAAAATATTTTAKEEEASEKLARCP) is disordered. Residues 230-248 (TAEPSPDPTAAAATATTTT) show a composition bias toward low complexity. The segment covering 249 to 259 (AKEEEASEKLA) has biased composition (basic and acidic residues). Residues Ser255, Ser267, Ser299, Ser300, and Ser329 each carry the phosphoserine modification.

It belongs to the EEIG family. As to expression, expressed in bone marrow-derived macrophages.

In Mus musculus (Mouse), this protein is EEIG family member 2 (Eeig2).